We begin with the raw amino-acid sequence, 135 residues long: Holo-[acyl-carrier-protein] synthase (135 aa).

Asp7 and Glu57 together coordinate Mg(2+).

This sequence belongs to the P-Pant transferase superfamily. AcpS family. Mg(2+) serves as cofactor.

The protein resides in the cytoplasm. The enzyme catalyses apo-[ACP] + CoA = holo-[ACP] + adenosine 3',5'-bisphosphate + H(+). Its function is as follows. Transfers the 4'-phosphopantetheine moiety from coenzyme A to a Ser of acyl-carrier-protein. The chain is Holo-[acyl-carrier-protein] synthase from Corynebacterium glutamicum (strain ATCC 13032 / DSM 20300 / JCM 1318 / BCRC 11384 / CCUG 27702 / LMG 3730 / NBRC 12168 / NCIMB 10025 / NRRL B-2784 / 534).